Consider the following 379-residue polypeptide: UDP-4-amino-4-deoxy-L-arabinose--oxoglutarate aminotransferase (379 aa).

Residue lysine 182 is modified to N6-(pyridoxal phosphate)lysine.

The protein belongs to the DegT/DnrJ/EryC1 family. ArnB subfamily. As to quaternary structure, homodimer. It depends on pyridoxal 5'-phosphate as a cofactor.

The enzyme catalyses UDP-4-amino-4-deoxy-beta-L-arabinose + 2-oxoglutarate = UDP-beta-L-threo-pentopyranos-4-ulose + L-glutamate. Its pathway is nucleotide-sugar biosynthesis; UDP-4-deoxy-4-formamido-beta-L-arabinose biosynthesis; UDP-4-deoxy-4-formamido-beta-L-arabinose from UDP-alpha-D-glucuronate: step 2/3. It functions in the pathway bacterial outer membrane biogenesis; lipopolysaccharide biosynthesis. In terms of biological role, catalyzes the conversion of UDP-4-keto-arabinose (UDP-Ara4O) to UDP-4-amino-4-deoxy-L-arabinose (UDP-L-Ara4N). The modified arabinose is attached to lipid A and is required for resistance to polymyxin and cationic antimicrobial peptides. The sequence is that of UDP-4-amino-4-deoxy-L-arabinose--oxoglutarate aminotransferase from Escherichia fergusonii (strain ATCC 35469 / DSM 13698 / CCUG 18766 / IAM 14443 / JCM 21226 / LMG 7866 / NBRC 102419 / NCTC 12128 / CDC 0568-73).